Here is a 472-residue protein sequence, read N- to C-terminus: Ribulose bisphosphate carboxylase large chain 1 (472 aa).

The substrate site is built by N115 and T165. The Proton acceptor role is filled by K167. K169 lines the substrate pocket. K193, D195, and E196 together coordinate Mg(2+). At K193 the chain carries N6-carboxylysine. Catalysis depends on H286, which acts as the Proton acceptor. Substrate contacts are provided by R287, H319, and S371.

This sequence belongs to the RuBisCO large chain family. Type I subfamily. In terms of assembly, heterohexadecamer of 8 large chains and 8 small chains. Mg(2+) is required as a cofactor.

It carries out the reaction 2 (2R)-3-phosphoglycerate + 2 H(+) = D-ribulose 1,5-bisphosphate + CO2 + H2O. It catalyses the reaction D-ribulose 1,5-bisphosphate + O2 = 2-phosphoglycolate + (2R)-3-phosphoglycerate + 2 H(+). Functionally, ruBisCO catalyzes two reactions: the carboxylation of D-ribulose 1,5-bisphosphate, the primary event in carbon dioxide fixation, as well as the oxidative fragmentation of the pentose substrate. Both reactions occur simultaneously and in competition at the same active site. In Hydrogenovibrio marinus, this protein is Ribulose bisphosphate carboxylase large chain 1.